The chain runs to 464 residues: Fumarate hydratase class II (464 aa).

Residues 96-98 (SGT), 127-130 (HPND), 137-139 (SSN), and Thr-185 contribute to the substrate site. His-186 acts as the Proton donor/acceptor in catalysis. Ser-316 is an active-site residue. Residues Ser-317 and 322–324 (KVN) contribute to the substrate site.

The protein belongs to the class-II fumarase/aspartase family. Fumarase subfamily. As to quaternary structure, homotetramer.

The protein resides in the cytoplasm. The catalysed reaction is (S)-malate = fumarate + H2O. The protein operates within carbohydrate metabolism; tricarboxylic acid cycle; (S)-malate from fumarate: step 1/1. Functionally, involved in the TCA cycle. Catalyzes the stereospecific interconversion of fumarate to L-malate. The sequence is that of Fumarate hydratase class II from Pseudomonas putida (strain ATCC 47054 / DSM 6125 / CFBP 8728 / NCIMB 11950 / KT2440).